The following is a 124-amino-acid chain: Probable 5-hydroxyisourate hydrolase (124 aa).

Positions 16, 57, and 121 each coordinate substrate.

The protein belongs to the transthyretin family. 5-hydroxyisourate hydrolase subfamily. As to quaternary structure, homotetramer.

The enzyme catalyses 5-hydroxyisourate + H2O = 5-hydroxy-2-oxo-4-ureido-2,5-dihydro-1H-imidazole-5-carboxylate + H(+). In terms of biological role, catalyzes the hydrolysis of 5-hydroxyisourate (HIU) to 2-oxo-4-hydroxy-4-carboxy-5-ureidoimidazoline (OHCU). The protein is Probable 5-hydroxyisourate hydrolase of Schizosaccharomyces pombe (strain 972 / ATCC 24843) (Fission yeast).